The primary structure comprises 433 residues: Histidinol dehydrogenase (433 aa).

Substrate is bound by residues S236, Q258, and H261. Q258 and H261 together coordinate Zn(2+). Catalysis depends on proton acceptor residues E325 and H326. Residues H326, D359, E413, and H418 each coordinate substrate. Zn(2+) is bound at residue D359. Position 418 (H418) interacts with Zn(2+).

It belongs to the histidinol dehydrogenase family. The cofactor is Zn(2+).

The enzyme catalyses L-histidinol + 2 NAD(+) + H2O = L-histidine + 2 NADH + 3 H(+). Its pathway is amino-acid biosynthesis; L-histidine biosynthesis; L-histidine from 5-phospho-alpha-D-ribose 1-diphosphate: step 9/9. Its function is as follows. Catalyzes the sequential NAD-dependent oxidations of L-histidinol to L-histidinaldehyde and then to L-histidine. This is Histidinol dehydrogenase from Pseudoalteromonas translucida (strain TAC 125).